The sequence spans 479 residues: MVPSQRLSRTSSISSNEDPAESHILELEAVSDTNTDCDMDPMEGSEEHSTDGEISSSEEEDEDPTPAHAVPAQPSSVVITPTSASFVIPRKKWDLQDKTVTLHRSPLCRDEDEKEETGNSSYTRGHKRRRGEVHGCTDESYGKRRHLPPGARAPRAPRAPRVPRAPRSPRAPRSNRATRGPRSESRGAGRSTRKQARQERSQRPLPNKPWFDMSLVKPVSKITFVTLPSPLASLTLEPIQDPFLQSMLAVAAHPEIGAWQKVQPRHELRRSYKTLREFFTKSTNKDTWLDARMQAIQNAGLCTLVAMLEETIFWLQEITYHGDLPLAPAEDILLACAMSLSKVILTKLKELAPCFLPNTRDYNFVKQLFYITCATARQNKVVETLSSSYVKQPLCLLAAYAAVAPAYINANCRRRHDEVEFLGHYIKNYNPGTLSSLLTEAVETHTRDCRSASCSRLVRAILSPATGSLGLFFVPGLNQ.

The segment covering 1–15 (MVPSQRLSRTSSISS) has biased composition (low complexity). 2 disordered regions span residues 1–78 (MVPS…SSVV) and 92–210 (KWDL…NKPW). Positions 35 to 44 (TDCDMDPMEG) are enriched in acidic residues. Residues 132 to 142 (EVHGCTDESYG) are compositionally biased toward basic and acidic residues. Zn(2+) contacts are provided by C354, H445, C449, and C454. Residues 354–454 (CFLPNTRDYN…HTRDCRSASC (101 aa)) form a CHC2-type zinc finger.

The protein belongs to the HHV-1 ICP27 protein family. As to quaternary structure, interacts with host XPO1 and with the XPO1 export pathway components small GTPase RAN and nucleoporin NUP214. Interacts with host SPEN, OTT1 and OTT3. Interacts with host SRSF1, SRSF3, SRSF7 and SRPK1. Interacts with host DHX9; this interaction may have an inhibitory effect on virion production. Interacts (via N-terminus) with host NXF1; this interaction plays a role in mRNA export. In terms of processing, phosphorylated by cellular protein kinase CK2.

It localises to the host nucleus. The protein resides in the host cytoplasm. Promotes the nuclear export of a subset of early and late viral mRNAs by interacting with mRNAs and cellular export proteins. Additionally may prevent the establishment of cellular antiviral state, by acting as an alternative splicing factor for cellular RNAs such as STAT1, resulting in a STAT1 mRNA incapable of producing the STAT1alpha isoform. The chain is mRNA export factor ICP27 homolog from Homo sapiens (Human).